Consider the following 496-residue polypeptide: MKQHLRPIMFVGTCSDAGKSVINAAFCRIFKQDGYQPAPFKAQNMSLNSYSTPEGGEMGRAQVVQAEACGISPHTDMNPILLKPTNDKSSQVVLNGKPVGNMSAKDYFGIQNQKEELFKEAIEAFKRLEARYNPIVLEGAGSISELNLRDRDITNMRMAIAAGASTYLVADIDRGGVFGSVYGTIALLRPEERVLMKGVIINKFRGDASLFEEGRSLLKELTGIPVVGVIPWFRDIKIEEEDSVALDMKNNTYKDGKINVAIILLKRMSNFTDFDVLEMDPRFNPYYTNNIDEIEKADIILLPGSKNTLSDLQSLRANGIAMAIIRAHKAGKKVIGICGGYQMMGVRLEDPESIEGNIPAIPGLGLLPQCTVIEQEKITRQSDFAFLPSSENKDCKGYEIHMGRTTLLGDAPEQPVARLEDGRTDGYYLNNRCWGSYMHGILDNPAVLDNLAEGFDTETTTGPFDYAAFKEEQYDKLAALVREHVDMEYIYNSIKN.

Residues 257 to 447 (KINVAIILLK…MHGILDNPAV (191 aa)) form the GATase cobBQ-type domain. Residue Cys-338 is the Nucleophile of the active site. The active site involves His-439.

This sequence belongs to the CobB/CobQ family. CobQ subfamily.

Its pathway is cofactor biosynthesis; adenosylcobalamin biosynthesis. In terms of biological role, catalyzes amidations at positions B, D, E, and G on adenosylcobyrinic A,C-diamide. NH(2) groups are provided by glutamine, and one molecule of ATP is hydrogenolyzed for each amidation. This is Cobyric acid synthase from Parabacteroides distasonis (strain ATCC 8503 / DSM 20701 / CIP 104284 / JCM 5825 / NCTC 11152).